The following is a 141-amino-acid chain: Hemoglobin subunit alpha-1/2 (141 aa).

Positions 1 to 141 constitute a Globin domain; the sequence is VLSPADKTNV…VSTVLTSKYR (141 aa). S3 carries the post-translational modification Phosphoserine. K7 carries the post-translational modification N6-succinyllysine. At T8 the chain carries Phosphothreonine. At K11 the chain carries N6-succinyllysine. Residue K16 is modified to N6-acetyllysine; alternate. The residue at position 16 (K16) is an N6-succinyllysine; alternate. Y24 carries the phosphotyrosine modification. Residue S35 is modified to Phosphoserine. Position 40 is an N6-succinyllysine (K40). At S49 the chain carries Phosphoserine. O2 is bound at residue H58. H87 contacts heme b. Phosphoserine is present on S102. Residue T108 is modified to Phosphothreonine. S124 bears the Phosphoserine mark. T134 and T137 each carry phosphothreonine. Phosphoserine is present on S138.

Belongs to the globin family. Heterotetramer of two alpha chains and two beta chains. In terms of tissue distribution, red blood cells.

Its function is as follows. Involved in oxygen transport from the lung to the various peripheral tissues. The protein is Hemoglobin subunit alpha-1/2 of Mustela putorius (European polecat).